The primary structure comprises 140 residues: Large-conductance mechanosensitive channel (140 aa).

The next 2 membrane-spanning stretches (helical) occupy residues 16 to 36 (VIDL…VTAL) and 84 to 104 (INTV…VKLI).

The protein belongs to the MscL family. In terms of assembly, homopentamer.

The protein resides in the cell inner membrane. Its function is as follows. Channel that opens in response to stretch forces in the membrane lipid bilayer. May participate in the regulation of osmotic pressure changes within the cell. This is Large-conductance mechanosensitive channel from Xanthomonas oryzae pv. oryzae (strain MAFF 311018).